The following is a 242-amino-acid chain: E3 ubiquitin-protein ligase AIRP2 (242 aa).

An RING-type zinc finger spans residues 146–184 (CGICLEIRNKVVLPTCNHSMCINCYRNWRARSQSCPFCR).

As to quaternary structure, interacts with ATP1/SDIRIP1. Expressed in germinating seeds, flower organs and siliques.

It is found in the cytoplasm. It localises to the cytosol. The catalysed reaction is S-ubiquitinyl-[E2 ubiquitin-conjugating enzyme]-L-cysteine + [acceptor protein]-L-lysine = [E2 ubiquitin-conjugating enzyme]-L-cysteine + N(6)-ubiquitinyl-[acceptor protein]-L-lysine.. Its function is as follows. Possesses E3 ubiquitin-protein ligase activity in vitro when associated with the E2 enzyme UBC8 in vitro. Plays combinatory roles with AIRP1 in the positive regulation of the abscisic acid-mediated drought stress response. Plays a positive role in abscisic acid- and high salinity-regulated seed germination through the ubiquitin-proteasome-dependent down-regulation of ATP1/SDIRIP1. The protein is E3 ubiquitin-protein ligase AIRP2 of Arabidopsis thaliana (Mouse-ear cress).